Consider the following 334-residue polypeptide: Beta-hexosaminidase (334 aa).

Substrate-binding positions include aspartate 60, arginine 68, arginine 133, and 163–164; that span reads KH. Histidine 176 (proton donor/acceptor) is an active-site residue. Catalysis depends on aspartate 247, which acts as the Nucleophile.

It belongs to the glycosyl hydrolase 3 family. NagZ subfamily.

Its subcellular location is the cytoplasm. It catalyses the reaction Hydrolysis of terminal non-reducing N-acetyl-D-hexosamine residues in N-acetyl-beta-D-hexosaminides.. It functions in the pathway cell wall biogenesis; peptidoglycan recycling. In terms of biological role, plays a role in peptidoglycan recycling by cleaving the terminal beta-1,4-linked N-acetylglucosamine (GlcNAc) from peptide-linked peptidoglycan fragments, giving rise to free GlcNAc, anhydro-N-acetylmuramic acid and anhydro-N-acetylmuramic acid-linked peptides. This is Beta-hexosaminidase from Xanthomonas axonopodis pv. citri (strain 306).